The sequence spans 321 residues: tRNA pseudouridine synthase B (321 aa).

Residue aspartate 47 is the Nucleophile of the active site.

Belongs to the pseudouridine synthase TruB family. Type 1 subfamily.

The enzyme catalyses uridine(55) in tRNA = pseudouridine(55) in tRNA. Functionally, responsible for synthesis of pseudouridine from uracil-55 in the psi GC loop of transfer RNAs. In Shewanella baltica (strain OS223), this protein is tRNA pseudouridine synthase B.